Consider the following 23-residue polypeptide: Prolamin alpha-3 (23 aa).

The sequence is that of Prolamin alpha-3 from Dactylis glomerata (Orchard grass).